Consider the following 211-residue polypeptide: Protein-methionine-sulfoxide reductase heme-binding subunit MsrQ (211 aa).

The next 5 helical transmembrane spans lie at Val8 to Trp28, Phe54 to Ile74, Leu82 to Val102, Pro116 to Thr136, and Phe153 to Ser173.

The protein belongs to the MsrQ family. Heterodimer of a catalytic subunit (MsrP) and a heme-binding subunit (MsrQ). The cofactor is FMN. Heme b serves as cofactor.

It is found in the cell inner membrane. In terms of biological role, part of the MsrPQ system that repairs oxidized periplasmic proteins containing methionine sulfoxide residues (Met-O), using respiratory chain electrons. Thus protects these proteins from oxidative-stress damage caused by reactive species of oxygen and chlorine generated by the host defense mechanisms. MsrPQ is essential for the maintenance of envelope integrity under bleach stress, rescuing a wide series of structurally unrelated periplasmic proteins from methionine oxidation, including the primary periplasmic chaperone SurA and the lipoprotein Pal. MsrQ provides electrons for reduction to the reductase catalytic subunit MsrP, using the quinone pool of the respiratory chain. In Escherichia coli O6:K15:H31 (strain 536 / UPEC), this protein is Protein-methionine-sulfoxide reductase heme-binding subunit MsrQ.